A 114-amino-acid chain; its full sequence is Ferredoxin (114 aa).

2 residues coordinate [3Fe-4S] cluster: Cys9 and Cys17. Residues Cys21, Cys40, Cys43, and Cys46 each coordinate [4Fe-4S] cluster. A 4Fe-4S ferredoxin-type domain is found at 31 to 60 (RMLYINPDECVDCGACKPACRVEAIYWEGD). Position 50 (Cys50) interacts with [3Fe-4S] cluster.

[4Fe-4S] cluster is required as a cofactor. It depends on [3Fe-4S] cluster as a cofactor.

In terms of biological role, ferredoxins are iron-sulfur proteins that transfer electrons in a wide variety of metabolic reactions. This is Ferredoxin (fdxA) from Mycobacterium tuberculosis (strain ATCC 25618 / H37Rv).